A 798-amino-acid chain; its full sequence is Integrin beta-7 (798 aa).

The first 19 residues, 1-19 (MVALPMVLVLLLVLSRGES), serve as a signal peptide directing secretion. Over 20–723 (ELDAKIPSTG…VRPQEKGADH (704 aa)) the chain is Extracellular. Positions 44–92 (SCQPAPSCQKCILSHPSCAWCKQLNFTASGEAEARRCARREELLARGCP) constitute a PSI domain. 7 cysteine pairs are disulfide-bonded: Cys-51–Cys-476, Cys-54–Cys-80, Cys-64–Cys-91, Cys-216–Cys-223, Cys-271–Cys-311, Cys-412–Cys-428, and Cys-448–Cys-474. Residue Asn-68 is glycosylated (N-linked (GlcNAc...) asparagine). The tract at residues 98–124 (EPRGQQEVLQDQPLSQGARGEGATQLA) is disordered. Residues 150–389 (YPVDLYYLMD…QLIMDAYNSL (240 aa)) enclose the VWFA domain. Ser-161 and Ser-163 together coordinate Mg(2+). Residues Ser-163, Asp-166, Asp-167, and Asp-198 each contribute to the Ca(2+) site. 4 residues coordinate Ca(2+): Asn-254, Asp-256, Pro-258, and Glu-259. Glu-259 is a binding site for Mg(2+). N-linked (GlcNAc...) asparagine glycosylation occurs at Asn-279. Ca(2+) is bound by residues Asp-289 and Glu-373. The N-linked (GlcNAc...) asparagine glycan is linked to Asn-434. A glycan (N-linked (GlcNAc...) asparagine) is linked at Asn-477. Intrachain disulfides connect Cys-478–Cys-497, Cys-488–Cys-500, Cys-502–Cys-511, Cys-513–Cys-545, Cys-527–Cys-543, Cys-537–Cys-548, Cys-550–Cys-559, Cys-561–Cys-582, Cys-566–Cys-580, Cys-574–Cys-585, Cys-587–Cys-596, Cys-598–Cys-621, Cys-605–Cys-619, Cys-613–Cys-624, Cys-626–Cys-635, Cys-638–Cys-641, Cys-645–Cys-688, Cys-651–Cys-670, and Cys-654–Cys-666. I-EGF domains lie at 478–512 (CSDTQPQAPHCSDGQGHLQCGVCSCAPGRLGRLCE), 513–560 (CSVA…HLCE), 561–597 (CDDASCERHEGILCGGFGRCQCGVCHCHANRTGRACE), and 598–636 (CSGDMDSCISPEGGLCSGHGRCKCNRCQCLDGYYGALCD). The N-linked (GlcNAc...) asparagine glycan is linked to Asn-531. Asn-590 carries N-linked (GlcNAc...) asparagine glycosylation. 2 N-linked (GlcNAc...) asparagine glycosylation sites follow: Asn-665 and Asn-674. Residues 724 to 746 (TQAIVLGCVGGIVAVGLGLVLAY) traverse the membrane as a helical segment. Over 747 to 798 (RLSVEIYDRREYSRFEKEQQQLNWKQDSNPLYKSAITTTINPRFQEADSPTL) the chain is Cytoplasmic. Tyr-778 is subject to Phosphotyrosine; by Tyr-kinases.

Belongs to the integrin beta chain family. As to quaternary structure, heterodimer of an alpha and a beta subunit. ITGB7/beta-7 associates with either ITGA4/alpha-4 or ITGAE/alpha-E. Integrin ITGA4/ITGB7 interacts with MADCAM1. Integrin ITGA4/ITGB7 interacts with VCAM1 and fibronectin. Interacts with FLNA (via filamin repeats 4, 9, 12, 17, 19, 21, and 23). (Microbial infection) May interact with HIV-1 gp120. As to expression, expressed in a variety of leukocyte lines.

It localises to the cell membrane. In terms of biological role, integrin ITGA4/ITGB7 (alpha-4/beta-7) (Peyer patches-specific homing receptor LPAM-1) is an adhesion molecule that mediates lymphocyte migration and homing to gut-associated lymphoid tissue (GALT). Integrin ITGA4/ITGB7 interacts with the cell surface adhesion molecules MADCAM1 which is normally expressed by the vascular endothelium of the gastrointestinal tract. Also interacts with VCAM1 and fibronectin, an extracellular matrix component. It recognizes one or more domains within the alternatively spliced CS-1 region of fibronectin. Interactions involve the tripeptide L-D-T in MADCAM1, and L-D-V in fibronectin. Integrin ITGAE/ITGB7 (alpha-E/beta-7, HML-1) is a receptor for E-cadherin. (Microbial infection) Binds to HIV-1 gp120, thereby allowing the virus to enter GALT, which is thought to be the major trigger of AIDS disease. Interaction would involve a tripeptide L-D-I in HIV-1 gp120. The protein is Integrin beta-7 (ITGB7) of Homo sapiens (Human).